A 1164-amino-acid polypeptide reads, in one-letter code: DNA-directed RNA polymerase subunit beta' (1164 aa).

Positions 60, 62, 75, and 78 each coordinate Zn(2+). Mg(2+) contacts are provided by aspartate 449, aspartate 451, and aspartate 453. 4 residues coordinate Zn(2+): cysteine 776, cysteine 850, cysteine 857, and cysteine 860.

Belongs to the RNA polymerase beta' chain family. As to quaternary structure, the RNAP catalytic core consists of 2 alpha, 1 beta, 1 beta' and 1 omega subunit. When a sigma factor is associated with the core the holoenzyme is formed, which can initiate transcription. Requires Mg(2+) as cofactor. The cofactor is Zn(2+).

The catalysed reaction is RNA(n) + a ribonucleoside 5'-triphosphate = RNA(n+1) + diphosphate. In terms of biological role, DNA-dependent RNA polymerase catalyzes the transcription of DNA into RNA using the four ribonucleoside triphosphates as substrates. The protein is DNA-directed RNA polymerase subunit beta' of Moorella thermoacetica (strain ATCC 39073 / JCM 9320).